The primary structure comprises 167 residues: MQVVLGSLFLLLLSTSHGWQIRDRIGDNELEERIIYPGTLWCGHGNKSSGPNELGRFKHTDACCRTHDMCPDVMSAGESKHGLTNTASHTRLSCDCDDKFYDCLKNSADTISSYFVGKMYFNLIDTKCYKLEHPVTGCGERTEGRCLHYTVDKSKPKVYQWFDLRKY.

The N-terminal stretch at 1–18 is a signal peptide; sequence MQVVLGSLFLLLLSTSHG. The propeptide occupies 19–33; it reads WQIRDRIGDNELEER. Tryptophan 41, glycine 43, and glycine 45 together coordinate Ca(2+). 5 disulfides stabilise this stretch: cysteine 42-cysteine 64, cysteine 63-cysteine 103, cysteine 70-cysteine 96, cysteine 94-cysteine 128, and cysteine 138-cysteine 146. Asparagine 46 carries N-linked (GlcNAc...) asparagine glycosylation. Residue histidine 67 is part of the active site. Aspartate 68 contacts Ca(2+). The active site involves aspartate 97.

Belongs to the phospholipase A2 family. Group III subfamily. It depends on Ca(2+) as a cofactor. In terms of processing, N-glycosylated; contains mannose, N-acetylglucosamine and fucose alphal-6 and/or alphal-3 linked to the innermost N-acetylglucosamine. Expressed by the venom gland.

The protein localises to the secreted. It catalyses the reaction a 1,2-diacyl-sn-glycero-3-phosphocholine + H2O = a 1-acyl-sn-glycero-3-phosphocholine + a fatty acid + H(+). In terms of biological role, in vivo, intraplantar injection in mice cause spontaneous pain behaviors and paw swelling. PLA2 catalyzes the calcium-dependent hydrolysis of the 2-acyl groups in 3-sn-phosphoglycerides. The sequence is that of Phospholipase A2 from Apis mellifera (Honeybee).